A 348-amino-acid polypeptide reads, in one-letter code: NADH-quinone oxidoreductase subunit H (348 aa).

9 helical membrane passes run Leu13–Leu33, Pro50–Leu70, Ala82–Ile102, Val115–Gly135, Ile161–Val181, Phe198–Leu218, Ala258–Val278, Trp285–Leu305, and Leu321–Leu341.

The protein belongs to the complex I subunit 1 family. In terms of assembly, NDH-1 is composed of 14 different subunits. Subunits NuoA, H, J, K, L, M, N constitute the membrane sector of the complex.

The protein localises to the cell inner membrane. It catalyses the reaction a quinone + NADH + 5 H(+)(in) = a quinol + NAD(+) + 4 H(+)(out). Functionally, NDH-1 shuttles electrons from NADH, via FMN and iron-sulfur (Fe-S) centers, to quinones in the respiratory chain. The immediate electron acceptor for the enzyme in this species is believed to be ubiquinone. Couples the redox reaction to proton translocation (for every two electrons transferred, four hydrogen ions are translocated across the cytoplasmic membrane), and thus conserves the redox energy in a proton gradient. This subunit may bind ubiquinone. This is NADH-quinone oxidoreductase subunit H from Agrobacterium fabrum (strain C58 / ATCC 33970) (Agrobacterium tumefaciens (strain C58)).